A 303-amino-acid polypeptide reads, in one-letter code: Putative HTH-type transcriptional regulatory protein Mpal_0031 (303 aa).

The region spanning 132–189 (LRGLREQRNMSLGDLGAVLGVSRRTISKYESGMGTTLEIAIKIEEVFDSGVIESIDLL) is the HTH cro/C1-type domain. The segment at residues 143-162 (LGDLGAVLGVSRRTISKYES) is a DNA-binding region (H-T-H motif).

This chain is Putative HTH-type transcriptional regulatory protein Mpal_0031, found in Methanosphaerula palustris (strain ATCC BAA-1556 / DSM 19958 / E1-9c).